A 678-amino-acid polypeptide reads, in one-letter code: DNA ligase (678 aa).

NAD(+)-binding positions include aspartate 47–aspartate 51, serine 96–leucine 97, and glutamate 122. Residue lysine 124 is the N6-AMP-lysine intermediate of the active site. The NAD(+) site is built by arginine 145, glutamate 182, lysine 300, and lysine 324. Cysteine 418, cysteine 421, cysteine 436, and cysteine 442 together coordinate Zn(2+). The BRCT domain occupies alanine 602–leucine 678.

Belongs to the NAD-dependent DNA ligase family. LigA subfamily. It depends on Mg(2+) as a cofactor. Mn(2+) serves as cofactor.

It carries out the reaction NAD(+) + (deoxyribonucleotide)n-3'-hydroxyl + 5'-phospho-(deoxyribonucleotide)m = (deoxyribonucleotide)n+m + AMP + beta-nicotinamide D-nucleotide.. DNA ligase that catalyzes the formation of phosphodiester linkages between 5'-phosphoryl and 3'-hydroxyl groups in double-stranded DNA using NAD as a coenzyme and as the energy source for the reaction. It is essential for DNA replication and repair of damaged DNA. This is DNA ligase from Francisella tularensis subsp. holarctica (strain FTNF002-00 / FTA).